Consider the following 100-residue polypeptide: Urease subunit gamma (100 aa).

It belongs to the urease gamma subunit family. In terms of assembly, heterotrimer of UreA (gamma), UreB (beta) and UreC (alpha) subunits. Three heterotrimers associate to form the active enzyme.

Its subcellular location is the cytoplasm. It catalyses the reaction urea + 2 H2O + H(+) = hydrogencarbonate + 2 NH4(+). The protein operates within nitrogen metabolism; urea degradation; CO(2) and NH(3) from urea (urease route): step 1/1. Its function is as follows. Ureolysis may allow urea to be employed as a nitrogen source for growth and produces ammonia which may protect from killing at low pH. The sequence is that of Urease subunit gamma from Streptococcus salivarius (strain 57.I).